The sequence spans 274 residues: 2,3,4,5-tetrahydropyridine-2,6-dicarboxylate N-succinyltransferase (274 aa).

Residues R103 and D140 each contribute to the substrate site.

The protein belongs to the transferase hexapeptide repeat family. In terms of assembly, homotrimer.

It is found in the cytoplasm. It catalyses the reaction (S)-2,3,4,5-tetrahydrodipicolinate + succinyl-CoA + H2O = (S)-2-succinylamino-6-oxoheptanedioate + CoA. It participates in amino-acid biosynthesis; L-lysine biosynthesis via DAP pathway; LL-2,6-diaminopimelate from (S)-tetrahydrodipicolinate (succinylase route): step 1/3. This chain is 2,3,4,5-tetrahydropyridine-2,6-dicarboxylate N-succinyltransferase, found in Pasteurella multocida (strain Pm70).